Here is a 482-residue protein sequence, read N- to C-terminus: tRNA sulfurtransferase (482 aa).

In terms of domain architecture, THUMP spans 61–165; that stretch reads LAIRDALTRI…DDRLLLIKGR (105 aa). ATP is bound by residues 183 to 184, Lys265, Gly287, and Gln296; that span reads LI. Residues Cys344 and Cys456 are joined by a disulfide bond. The Rhodanese domain occupies 404 to 482; it reads FGPNDVILDI…GFNNVKVYRP (79 aa). Cys456 functions as the Cysteine persulfide intermediate in the catalytic mechanism.

This sequence belongs to the ThiI family.

It is found in the cytoplasm. The enzyme catalyses [ThiI sulfur-carrier protein]-S-sulfanyl-L-cysteine + a uridine in tRNA + 2 reduced [2Fe-2S]-[ferredoxin] + ATP + H(+) = [ThiI sulfur-carrier protein]-L-cysteine + a 4-thiouridine in tRNA + 2 oxidized [2Fe-2S]-[ferredoxin] + AMP + diphosphate. It catalyses the reaction [ThiS sulfur-carrier protein]-C-terminal Gly-Gly-AMP + S-sulfanyl-L-cysteinyl-[cysteine desulfurase] + AH2 = [ThiS sulfur-carrier protein]-C-terminal-Gly-aminoethanethioate + L-cysteinyl-[cysteine desulfurase] + A + AMP + 2 H(+). Its pathway is cofactor biosynthesis; thiamine diphosphate biosynthesis. Catalyzes the ATP-dependent transfer of a sulfur to tRNA to produce 4-thiouridine in position 8 of tRNAs, which functions as a near-UV photosensor. Also catalyzes the transfer of sulfur to the sulfur carrier protein ThiS, forming ThiS-thiocarboxylate. This is a step in the synthesis of thiazole, in the thiamine biosynthesis pathway. The sulfur is donated as persulfide by IscS. This chain is tRNA sulfurtransferase, found in Escherichia fergusonii (strain ATCC 35469 / DSM 13698 / CCUG 18766 / IAM 14443 / JCM 21226 / LMG 7866 / NBRC 102419 / NCTC 12128 / CDC 0568-73).